A 179-amino-acid polypeptide reads, in one-letter code: MECMAVNDISYGREAEIWPRDYSMLARRVQFLRFNDIPVRLVSNNARIITGYIAKFNPKENLILASDKPKGNKRIEVKLESLAILEELSGNDAFNLSLVPADGFNLQQYTPSRRDYFSICNKCYKQGVGIKIYMKYGQVLTGKTTGVNACQVGVRTSNGNHMQVMFDWVSRITSSDYAE.

Transcriptional repressor of the FliC phase-1 flagellin. The protein is Repressor of phase 1 flagellin gene (fljA) of Salmonella typhimurium (strain LT2 / SGSC1412 / ATCC 700720).